A 910-amino-acid chain; its full sequence is E3 ubiquitin-protein ligase MARCHF6 (910 aa).

Residue methionine 1 is modified to N-acetylmethionine. An RING-CH-type zinc finger spans residues 1-62 (MDTAEEDICR…ELCKHRFAFT (62 aa)). Topologically, residues 1–91 (MDTAEEDICR…LVTSIGTAIR (91 aa)) are cytoplasmic. Positions 9, 12, 26, 28, 36, 39, 52, and 55 each coordinate Zn(2+). The helical transmembrane segment at 92–112 (YWFHYTLVAFAWLGVVPLTAC) threads the bilayer. Residues 113 to 142 (RIYKCLFTGSVSSLLTLPLDMLSTENLLAD) are Extracellular-facing. The chain crosses the membrane as a helical span at residues 143 to 163 (CLQGCFVVTCTLCAFISLVWL). Over 164-283 (REQIVHGGAP…WERMLGLDGS (120 aa)) the chain is Cytoplasmic. Residues 185–256 (AAGHHQNEAP…AADANNGAQD (72 aa)) are disordered. Positions 223–248 (DAQDDQAEEEEEDNEEEDDAGVEDAA) are enriched in acidic residues. A helical transmembrane segment spans residues 284–304 (LVFLEHVFWVVSLNTLFILVF). Residues 305–336 (AFCPYHIGHFSLVGLGFEEHVQASHFEGLITT) are Extracellular-facing. Residues 337 to 357 (IVGYILLAITLIICHGLATLV) form a helical membrane-spanning segment. Residues 358–376 (KFHRSRRLLGVCYIVVKVS) lie on the Cytoplasmic side of the membrane. The helical transmembrane segment at 377 to 397 (LLVVVEIGVFPLICGWWLDIC) threads the bilayer. Over 398 to 421 (SLEMFDATLKDRELSFQSAPGTTM) the chain is Extracellular. Residues 422–442 (FLHWLVGMVYVFYFASFILLL) form a helical membrane-spanning segment. Residues 443–480 (REVLRPGVLWFLRNLNDPDFNPVQEMIHLPIYRHLRRF) are Cytoplasmic-facing. The chain crosses the membrane as a helical span at residues 481–501 (ILSVIVFGSIVLLMLWLPIRI). Over 502–519 (IKSVLPNFLPYNVMLYSD) the chain is Extracellular. Residues 520–540 (APVSELSLELLLLQVVLPALL) traverse the membrane as a helical segment. Residues 541-632 (EQRTHEAVAE…YRRPLNFPLR (92 aa)) are Cytoplasmic-facing. Residues 633-653 (IFLLIVFMCITLLIASLICLT) traverse the membrane as a helical segment. At 654–678 (LPVFAGRWLMSFWTGTAKIHELYTA) the chain is on the extracellular side. The chain crosses the membrane as a helical span at residues 679 to 699 (ACGLYVCWLTIRAVTVMVAWM). The Cytoplasmic segment spans residues 700–721 (PQGRRVVFQKVKEWSLMIMKTL). The chain crosses the membrane as a helical span at residues 722–742 (IVAVLLAGVVPLLLGLLFELV). The Extracellular portion of the chain corresponds to 743–764 (IVAPLRVPLDQTPLFYPWQDWA). The helical transmembrane segment at 765-785 (LGVLHAKIIAAITLMGPQWWL) threads the bilayer. Residues 786-815 (KTVIEQVYANGIRNIDLHYIVRKLAAPVIS) are Cytoplasmic-facing. Residues 816-836 (VLLLSLCVPYVIASGVVPLLG) form a helical membrane-spanning segment. Over 837–848 (VTAEMQNLVHRR) the chain is Extracellular. A helical transmembrane segment spans residues 849–869 (IYPFLLMVVVLMAILSFQVRQ). At 870-910 (FKRLYEHIKNDKYLVGQRLVNYERKSGKQGSSPPPPQSSQE) the chain is on the cytoplasmic side.

It belongs to the DOA10/MARCHF6 family. Interacts with DIO2. Interacts with SQLE. Post-translationally, auto-ubiquitinated, which results in proteasomal degradation. Deubiquitinated by USP19; protecting MARCHF6 from p97-mediated proteasomal degradation.

The protein resides in the endoplasmic reticulum membrane. It catalyses the reaction S-ubiquitinyl-[E2 ubiquitin-conjugating enzyme]-L-cysteine + [acceptor protein]-L-lysine = [E2 ubiquitin-conjugating enzyme]-L-cysteine + N(6)-ubiquitinyl-[acceptor protein]-L-lysine.. The protein operates within protein modification; protein ubiquitination. In terms of biological role, endoplasmic reticulum membrane-associated E3 ubiquitin ligase that plays a critical role in mitigating endoplasmic reticulum stress, the regulation of cholesterol and lipid homeostasis, and ferroptosis. Acts as a pivotal component of both the Ac/N-degron pathway (targeting the N-terminal acetyl group of substrates) and the ER-associated protein degradation-cytosol (ERAD-C) pathway (targeting misfolded substrates). For instance, mediates the degradation of Ac/N-degron-bearing proteins such as the G-protein regulator RGS2 and the lipid droplet protein PLIN2. Suppresses endoplasmic reticulum stress and ferroptosis through cytosolic POMC degradation. Prevents ferroptosis by acting as a NADPH sensor during lipid peroxidation through its C-terminal regulatory region. Facilitates also the degradation of selected endoplasmic reticulum proteins by associating with signal peptide peptidase for the turnover of endogenous tail-anchored proteins. Promotes ubiquitination of DIO2, leading to its degradation. By ubiquitinating and thereby modulating the stability of many proteins of the cholesterol pathway including SQLE, CYP51A1, CYP11A1 and HMGCR, acts as a crucial post-translational regulator of cholesterol synthesis. The sequence is that of E3 ubiquitin-protein ligase MARCHF6 (MARCHF6) from Pongo abelii (Sumatran orangutan).